A 248-amino-acid polypeptide reads, in one-letter code: Probable phosphatase VFMJ11_A0899 (248 aa).

Residues His8, His10, His16, His41, Glu74, His101, His131, Asp193, and His195 each contribute to the Zn(2+) site.

Belongs to the PHP family. Requires Zn(2+) as cofactor.

The protein is Probable phosphatase VFMJ11_A0899 of Aliivibrio fischeri (strain MJ11) (Vibrio fischeri).